A 131-amino-acid polypeptide reads, in one-letter code: Translation initiation factor 5A (131 aa).

Residue Lys37 is modified to Hypusine.

Belongs to the eIF-5A family.

Its subcellular location is the cytoplasm. Functions by promoting the formation of the first peptide bond. In Methanococcus maripaludis (strain C6 / ATCC BAA-1332), this protein is Translation initiation factor 5A (eIF5A).